We begin with the raw amino-acid sequence, 356 residues long: S-adenosylmethionine:tRNA ribosyltransferase-isomerase (356 aa).

This sequence belongs to the QueA family. In terms of assembly, monomer.

It localises to the cytoplasm. It carries out the reaction 7-aminomethyl-7-carbaguanosine(34) in tRNA + S-adenosyl-L-methionine = epoxyqueuosine(34) in tRNA + adenine + L-methionine + 2 H(+). The protein operates within tRNA modification; tRNA-queuosine biosynthesis. Functionally, transfers and isomerizes the ribose moiety from AdoMet to the 7-aminomethyl group of 7-deazaguanine (preQ1-tRNA) to give epoxyqueuosine (oQ-tRNA). The polypeptide is S-adenosylmethionine:tRNA ribosyltransferase-isomerase (Shigella dysenteriae serotype 1 (strain Sd197)).